The chain runs to 891 residues: Putative alpha,alpha-trehalose-phosphate synthase [UDP-forming] 100 kDa subunit (891 aa).

Phosphothreonine is present on threonine 88. Residues 88–126 form a disordered region; that stretch reads TGGSMTPGLGAMSPIPGSGRSSPLYTQPRSRATSPSRVR. Residues 106-124 are compositionally biased toward polar residues; it reads GRSSPLYTQPRSRATSPSR. Residues serine 108 and serine 109 each carry the phosphoserine modification. The segment at 132 to 613 is glycosyltransferase; sequence AAPGIGAGAL…VTGFETKLKK (482 aa).

It in the N-terminal section; belongs to the glycosyltransferase 20 family.

It catalyses the reaction D-glucose 6-phosphate + UDP-alpha-D-glucose = alpha,alpha-trehalose 6-phosphate + UDP + H(+). The polypeptide is Putative alpha,alpha-trehalose-phosphate synthase [UDP-forming] 100 kDa subunit (Schizosaccharomyces pombe (strain 972 / ATCC 24843) (Fission yeast)).